The sequence spans 300 residues: NAD kinase (300 aa).

The active-site Proton acceptor is Asp75. NAD(+)-binding positions include 75–76 (DG), 149–150 (ND), Arg177, Asp179, 190–195 (TAYALS), Ala214, and Gln248.

Belongs to the NAD kinase family. The cofactor is a divalent metal cation.

It is found in the cytoplasm. It catalyses the reaction NAD(+) + ATP = ADP + NADP(+) + H(+). Involved in the regulation of the intracellular balance of NAD and NADP, and is a key enzyme in the biosynthesis of NADP. Catalyzes specifically the phosphorylation on 2'-hydroxyl of the adenosine moiety of NAD to yield NADP. This is NAD kinase from Burkholderia orbicola (strain MC0-3).